The following is a 95-amino-acid chain: Large ribosomal subunit protein eL31 (95 aa).

It belongs to the eukaryotic ribosomal protein eL31 family.

The sequence is that of Large ribosomal subunit protein eL31 (rpl31e) from Pyrococcus horikoshii (strain ATCC 700860 / DSM 12428 / JCM 9974 / NBRC 100139 / OT-3).